Consider the following 264-residue polypeptide: Cell division protein DivIB (264 aa).

The Cytoplasmic segment spans residues 1 to 23 (MAVYEERIPQVKQQRPRRRGNRK). A helical membrane pass occupies residues 24-44 (LVFLLVLFFLTILIIVFIRSP). Residues 45–264 (YSKVQEIRVT…GQEQPQQPQQ (220 aa)) lie on the Extracellular side of the membrane. Residues 46-114 (SKVQEIRVTG…GLITLHITEQ (69 aa)) enclose the POTRA domain.

This sequence belongs to the FtsQ/DivIB family. DivIB subfamily.

It is found in the cell membrane. Cell division protein that may be involved in stabilizing or promoting the assembly of the division complex. This Brevibacillus brevis (strain 47 / JCM 6285 / NBRC 100599) protein is Cell division protein DivIB.